Reading from the N-terminus, the 90-residue chain is Small ribosomal subunit protein uS15 (90 aa).

This sequence belongs to the universal ribosomal protein uS15 family. As to quaternary structure, part of the 30S ribosomal subunit. Forms a bridge to the 50S subunit in the 70S ribosome, contacting the 23S rRNA.

Functionally, one of the primary rRNA binding proteins, it binds directly to 16S rRNA where it helps nucleate assembly of the platform of the 30S subunit by binding and bridging several RNA helices of the 16S rRNA. Its function is as follows. Forms an intersubunit bridge (bridge B4) with the 23S rRNA of the 50S subunit in the ribosome. This is Small ribosomal subunit protein uS15 from Aquifex aeolicus (strain VF5).